A 94-amino-acid chain; its full sequence is Pyrimidine/purine nucleoside phosphorylase (94 aa).

Belongs to the nucleoside phosphorylase PpnP family.

It carries out the reaction a purine D-ribonucleoside + phosphate = a purine nucleobase + alpha-D-ribose 1-phosphate. It catalyses the reaction adenosine + phosphate = alpha-D-ribose 1-phosphate + adenine. The catalysed reaction is cytidine + phosphate = cytosine + alpha-D-ribose 1-phosphate. The enzyme catalyses guanosine + phosphate = alpha-D-ribose 1-phosphate + guanine. It carries out the reaction inosine + phosphate = alpha-D-ribose 1-phosphate + hypoxanthine. It catalyses the reaction thymidine + phosphate = 2-deoxy-alpha-D-ribose 1-phosphate + thymine. The catalysed reaction is uridine + phosphate = alpha-D-ribose 1-phosphate + uracil. The enzyme catalyses xanthosine + phosphate = alpha-D-ribose 1-phosphate + xanthine. Catalyzes the phosphorolysis of diverse nucleosides, yielding D-ribose 1-phosphate and the respective free bases. Can use uridine, adenosine, guanosine, cytidine, thymidine, inosine and xanthosine as substrates. Also catalyzes the reverse reactions. The polypeptide is Pyrimidine/purine nucleoside phosphorylase (Saccharophagus degradans (strain 2-40 / ATCC 43961 / DSM 17024)).